The chain runs to 404 residues: Probable tRNA sulfurtransferase (404 aa).

The region spanning 60–165 is the THUMP domain; that stretch reads QPIVEALKLV…DEAAYISYEE (106 aa). ATP is bound by residues 183–184, 208–209, arginine 265, glycine 287, and glutamine 296; these read ML and HF.

It belongs to the ThiI family.

Its subcellular location is the cytoplasm. It catalyses the reaction [ThiI sulfur-carrier protein]-S-sulfanyl-L-cysteine + a uridine in tRNA + 2 reduced [2Fe-2S]-[ferredoxin] + ATP + H(+) = [ThiI sulfur-carrier protein]-L-cysteine + a 4-thiouridine in tRNA + 2 oxidized [2Fe-2S]-[ferredoxin] + AMP + diphosphate. The catalysed reaction is [ThiS sulfur-carrier protein]-C-terminal Gly-Gly-AMP + S-sulfanyl-L-cysteinyl-[cysteine desulfurase] + AH2 = [ThiS sulfur-carrier protein]-C-terminal-Gly-aminoethanethioate + L-cysteinyl-[cysteine desulfurase] + A + AMP + 2 H(+). It functions in the pathway cofactor biosynthesis; thiamine diphosphate biosynthesis. In terms of biological role, catalyzes the ATP-dependent transfer of a sulfur to tRNA to produce 4-thiouridine in position 8 of tRNAs, which functions as a near-UV photosensor. Also catalyzes the transfer of sulfur to the sulfur carrier protein ThiS, forming ThiS-thiocarboxylate. This is a step in the synthesis of thiazole, in the thiamine biosynthesis pathway. The sulfur is donated as persulfide by IscS. The sequence is that of Probable tRNA sulfurtransferase from Streptococcus pyogenes serotype M1.